Reading from the N-terminus, the 342-residue chain is Ribosomal RNA small subunit methyltransferase C (342 aa).

This sequence belongs to the methyltransferase superfamily. RsmC family. Monomer.

It is found in the cytoplasm. It catalyses the reaction guanosine(1207) in 16S rRNA + S-adenosyl-L-methionine = N(2)-methylguanosine(1207) in 16S rRNA + S-adenosyl-L-homocysteine + H(+). In terms of biological role, specifically methylates the guanine in position 1207 of 16S rRNA in the 30S particle. In Salmonella agona (strain SL483), this protein is Ribosomal RNA small subunit methyltransferase C.